The chain runs to 311 residues: Putative ankyrin repeat protein RF_0923 (311 aa).

ANK repeat units lie at residues 42–71 (IDNTALIWAVDKGLEKVCEMLIPKMSEQAI), 77–106 (NGNTALTLAASKGLEKICELLIPKMSPQAI), 112–141 (NGNTALTWAAWKDLEKICEMLIPKMSPQAI), 147–176 (NGNTALILAAWKGLEKICKILIPKMFEQAI), and 182–213 (KGCTALTLAADKDLKKIYELLINKMSIDAINH).

In Rickettsia felis (strain ATCC VR-1525 / URRWXCal2) (Rickettsia azadi), this protein is Putative ankyrin repeat protein RF_0923.